Consider the following 204-residue polypeptide: tRNA (pseudouridine(54)-N(1))-methyltransferase (204 aa).

Residues Leu-136 and Gly-158 each coordinate S-adenosyl-L-methionine.

The protein belongs to the methyltransferase superfamily. TrmY family. As to quaternary structure, homodimer.

Its subcellular location is the cytoplasm. It carries out the reaction pseudouridine(54) in tRNA + S-adenosyl-L-methionine = N(1)-methylpseudouridine(54) in tRNA + S-adenosyl-L-homocysteine + H(+). Functionally, specifically catalyzes the N1-methylation of pseudouridine at position 54 (Psi54) in tRNAs. The protein is tRNA (pseudouridine(54)-N(1))-methyltransferase of Pyrococcus abyssi (strain GE5 / Orsay).